The following is a 189-amino-acid chain: dCTP deaminase, dUMP-forming (189 aa).

DCTP is bound by residues 101-106 (KSSLGR), D119, 127-129 (TLE), Q148, Y162, and Q174. The active-site Proton donor/acceptor is the E129.

This sequence belongs to the dCTP deaminase family. As to quaternary structure, homotrimer.

The enzyme catalyses dCTP + 2 H2O = dUMP + NH4(+) + diphosphate. The protein operates within pyrimidine metabolism; dUMP biosynthesis; dUMP from dCTP: step 1/1. Its function is as follows. Bifunctional enzyme that catalyzes both the deamination of dCTP to dUTP and the hydrolysis of dUTP to dUMP without releasing the toxic dUTP intermediate. The chain is dCTP deaminase, dUMP-forming from Rhodococcus jostii (strain RHA1).